The sequence spans 485 residues: Cysteine--tRNA ligase (485 aa).

Cysteine 29 is a Zn(2+) binding site. Positions 31–41 (ATVQGMPHVGH) match the 'HIGH' region motif. Residues 174–198 (QRVEDMQDAPDADPRGKRDPHDFAL) form a disordered region. The span at 185 to 197 (ADPRGKRDPHDFA) shows a compositional bias: basic and acidic residues. Residues cysteine 227, histidine 252, and glutamate 256 each coordinate Zn(2+). A 'KMSKS' region motif is present at residues 283-287 (KMSKS). Lysine 286 lines the ATP pocket.

It belongs to the class-I aminoacyl-tRNA synthetase family. In terms of assembly, monomer. Zn(2+) serves as cofactor.

The protein localises to the cytoplasm. It carries out the reaction tRNA(Cys) + L-cysteine + ATP = L-cysteinyl-tRNA(Cys) + AMP + diphosphate. The sequence is that of Cysteine--tRNA ligase from Micrococcus luteus (strain ATCC 4698 / DSM 20030 / JCM 1464 / CCM 169 / CCUG 5858 / IAM 1056 / NBRC 3333 / NCIMB 9278 / NCTC 2665 / VKM Ac-2230) (Micrococcus lysodeikticus).